We begin with the raw amino-acid sequence, 174 residues long: ATP-dependent protease subunit HslV (174 aa).

The active site involves Thr-2. Gly-157, Cys-160, and Thr-163 together coordinate Na(+).

Belongs to the peptidase T1B family. HslV subfamily. A double ring-shaped homohexamer of HslV is capped on each side by a ring-shaped HslU homohexamer. The assembly of the HslU/HslV complex is dependent on binding of ATP.

The protein resides in the cytoplasm. The catalysed reaction is ATP-dependent cleavage of peptide bonds with broad specificity.. With respect to regulation, allosterically activated by HslU binding. Its function is as follows. Protease subunit of a proteasome-like degradation complex believed to be a general protein degrading machinery. This is ATP-dependent protease subunit HslV from Shewanella putrefaciens (strain CN-32 / ATCC BAA-453).